Reading from the N-terminus, the 621-residue chain is Protein Rep78 (621 aa).

Residues 1-199 (MPGFYEIVIK…AQHLTHVSQT (199 aa)) form the PV NS1-Nuc domain. The a divalent metal cation site is built by Glu83, His90, and His92. The RCR-2 motif lies at 90–92 (HMH). Catalysis depends on Tyr156, which acts as the For nuclease activity. The RCR-3 signature appears at 156–160 (YLLPK). Residues 196-211 (VSQTQEQNKENQNPNS) are compositionally biased toward polar residues. The segment at 196 to 216 (VSQTQEQNKENQNPNSDAPVI) is disordered. The 156-residue stretch at 308–463 (DPQYAASVFL…LDHDFGKVTK (156 aa)) folds into the SF3 helicase domain. Residue 334–341 (GPATTGKT) coordinates ATP. The segment at 489–520 (GGAKKRPAPSDADISEPKRVRESVAQPSTSDA) is disordered.

Hexamer when associated with the viral DNA ori sequence. Interacts with host PRKX. Interacts with host TOPORS. Interacts with host TBP and SUB1/PC4; these interactions play important roles in transcriptional regulation. Requires a divalent metal cation as cofactor.

It localises to the host nucleus. Its function is as follows. Plays an essential role in the initiation of viral DNA synthesis. Binds specifically to an inverted terminal repeat element (ITR) on the 3' and 5' ends of the viral DNA, where it cleaves a site specifically to generate a priming site for initiation of the synthesis of a complementary strand. Also plays a role as transcriptional regulator, DNA helicase and as key factors in site-specific integration of the viral genome. Regulates host PKA activity by interacting with host PRKX as a mechanism of interfering with helper virus propagation and promoting its own replication. Inhibits the host cell cycle G1/S, S and G2/M transitions. These arrests may provide essential cellular factors for viral DNA replication. In Adeno-associated virus 2 (isolate Srivastava/1982) (AAV-2), this protein is Protein Rep78 (Rep78).